The primary structure comprises 150 residues: Large ribosomal subunit protein uL15 (150 aa).

Positions 1-52 (MDLSNLKPAEGSVRKNSKRIGRGEGSGKGGTATRGHKGAKSRSGYSKKIGFE) are disordered. Positions 23–32 (GEGSGKGGTA) are enriched in gly residues.

Belongs to the universal ribosomal protein uL15 family. In terms of assembly, part of the 50S ribosomal subunit.

Binds to the 23S rRNA. The sequence is that of Large ribosomal subunit protein uL15 from Christiangramia forsetii (strain DSM 17595 / CGMCC 1.15422 / KT0803) (Gramella forsetii).